The primary structure comprises 369 residues: MSDNGQKKVIVGMSGGVDSSVSAWLLQQQGYRVEGLFMKNWEEDDNEEYCTAASDLADARAVCDTLGIALHTVNFAAEYWDNVFAHFLAEYQVGRTPNPDILCNKEIKFKAFLEFADDDLGADYIATGHYVRRADVNGKSRLLRGLDDNKDQSYFLYTLGHAQLARCLFPIGELAKPEVRRIAADLGLATAAKKDSTGICFIGERKFRDFLGRYLPVQPGAIVSVDGQEVGRHQGLMYHTLGQRKGLGIGGTRDGSEDPWYVVDKDLDHNRLIVAQGHQHPRLMSTGLTAGQLHWVEREPLTEALRCTVKIRYRQPDIACLVTPQADGRLQVTFDQPVTAVTPGQSAVFYLAERCLGGGIIEARQPLSH.

Residues 12–19 (GMSGGVDS) and methionine 38 each bind ATP. Residues 98–100 (NPD) are interaction with target base in tRNA. Residue cysteine 103 is the Nucleophile of the active site. Cysteine 103 and cysteine 200 are disulfide-bonded. Position 128 (glycine 128) interacts with ATP. The segment at 150-152 (KDQ) is interaction with tRNA. Catalysis depends on cysteine 200, which acts as the Cysteine persulfide intermediate. Positions 312-313 (RY) are interaction with tRNA.

This sequence belongs to the MnmA/TRMU family. As to quaternary structure, interacts with TusE.

The protein resides in the cytoplasm. It carries out the reaction S-sulfanyl-L-cysteinyl-[protein] + uridine(34) in tRNA + AH2 + ATP = 2-thiouridine(34) in tRNA + L-cysteinyl-[protein] + A + AMP + diphosphate + H(+). Functionally, catalyzes the 2-thiolation of uridine at the wobble position (U34) of tRNA(Lys), tRNA(Glu) and tRNA(Gln), leading to the formation of s(2)U34, the first step of tRNA-mnm(5)s(2)U34 synthesis. Sulfur is provided by IscS, via a sulfur-relay system. Binds ATP and its substrate tRNAs. The protein is tRNA-specific 2-thiouridylase MnmA of Sodalis glossinidius (strain morsitans).